We begin with the raw amino-acid sequence, 95 residues long: Co-chaperonin GroES (95 aa).

This sequence belongs to the GroES chaperonin family. Heptamer of 7 subunits arranged in a ring. Interacts with the chaperonin GroEL.

The protein resides in the cytoplasm. Functionally, together with the chaperonin GroEL, plays an essential role in assisting protein folding. The GroEL-GroES system forms a nano-cage that allows encapsulation of the non-native substrate proteins and provides a physical environment optimized to promote and accelerate protein folding. GroES binds to the apical surface of the GroEL ring, thereby capping the opening of the GroEL channel. This is Co-chaperonin GroES from Xylella fastidiosa (strain M12).